The primary structure comprises 748 residues: Glucans biosynthesis glucosyltransferase H (748 aa).

A run of 7 helical transmembrane segments spans residues leucine 85 to methionine 107, phenylalanine 127 to leucine 149, glycine 443 to leucine 465, alanine 494 to isoleucine 516, glycine 529 to isoleucine 551, leucine 587 to leucine 606, and leucine 608 to serine 630.

This sequence belongs to the glycosyltransferase 2 family. OpgH subfamily.

The protein resides in the cell inner membrane. It participates in glycan metabolism; osmoregulated periplasmic glucan (OPG) biosynthesis. Its function is as follows. Involved in the biosynthesis of osmoregulated periplasmic glucans (OPGs). In Bradyrhizobium diazoefficiens (strain JCM 10833 / BCRC 13528 / IAM 13628 / NBRC 14792 / USDA 110), this protein is Glucans biosynthesis glucosyltransferase H.